A 338-amino-acid polypeptide reads, in one-letter code: Anthranilate phosphoribosyltransferase (338 aa).

5-phospho-alpha-D-ribose 1-diphosphate contacts are provided by residues G81, 84–85, S89, 91–94, 109–117, and A121; these read GD, NVST, and KHGNRALSS. G81 is a binding site for anthranilate. S93 is a binding site for Mg(2+). N112 provides a ligand contact to anthranilate. R167 provides a ligand contact to anthranilate. Mg(2+)-binding residues include D226 and E227.

It belongs to the anthranilate phosphoribosyltransferase family. As to quaternary structure, homodimer. Mg(2+) is required as a cofactor.

It carries out the reaction N-(5-phospho-beta-D-ribosyl)anthranilate + diphosphate = 5-phospho-alpha-D-ribose 1-diphosphate + anthranilate. It participates in amino-acid biosynthesis; L-tryptophan biosynthesis; L-tryptophan from chorismate: step 2/5. Its function is as follows. Catalyzes the transfer of the phosphoribosyl group of 5-phosphorylribose-1-pyrophosphate (PRPP) to anthranilate to yield N-(5'-phosphoribosyl)-anthranilate (PRA). This is Anthranilate phosphoribosyltransferase from Rhodopseudomonas palustris (strain BisB5).